Consider the following 447-residue polypeptide: Argininosuccinate synthase (447 aa).

ATP-binding positions include 17-25 (AFSGGLDTS) and A43. Y99 lines the L-citrulline pocket. ATP contacts are provided by G129 and T131. Residues T131, N135, and D136 each contribute to the L-aspartate site. N135 is a binding site for L-citrulline. D136 contributes to the ATP binding site. L-citrulline contacts are provided by R139 and S192. D194 contacts ATP. L-citrulline contacts are provided by T201, E203, and E280.

It belongs to the argininosuccinate synthase family. Type 2 subfamily. Homotetramer.

The protein resides in the cytoplasm. It catalyses the reaction L-citrulline + L-aspartate + ATP = 2-(N(omega)-L-arginino)succinate + AMP + diphosphate + H(+). It participates in amino-acid biosynthesis; L-arginine biosynthesis; L-arginine from L-ornithine and carbamoyl phosphate: step 2/3. This chain is Argininosuccinate synthase, found in Klebsiella pneumoniae (strain 342).